A 573-amino-acid polypeptide reads, in one-letter code: Membrane protein insertase YidC (573 aa).

The next 6 helical transmembrane spans lie at V6–D26, F355–F375, W379–A399, G446–V466, P488–P508, and P524–V544.

This sequence belongs to the OXA1/ALB3/YidC family. Type 1 subfamily. In terms of assembly, interacts with the Sec translocase complex via SecD. Specifically interacts with transmembrane segments of nascent integral membrane proteins during membrane integration.

It is found in the cell inner membrane. Required for the insertion and/or proper folding and/or complex formation of integral membrane proteins into the membrane. Involved in integration of membrane proteins that insert both dependently and independently of the Sec translocase complex, as well as at least some lipoproteins. Aids folding of multispanning membrane proteins. The polypeptide is Membrane protein insertase YidC (Xanthomonas campestris pv. campestris (strain ATCC 33913 / DSM 3586 / NCPPB 528 / LMG 568 / P 25)).